Reading from the N-terminus, the 85-residue chain is MAHKKGQGSTQNNRDSAGRRLGVKKFGGEFVRAGNIIIRQRGTKVHPGNNVGLGKDHTIFALIDGVVKFERYGKDRQKVSVYPVE.

Residues 1 to 21 form a disordered region; that stretch reads MAHKKGQGSTQNNRDSAGRRL.

This sequence belongs to the bacterial ribosomal protein bL27 family.

The polypeptide is Large ribosomal subunit protein bL27 (Nitratiruptor sp. (strain SB155-2)).